Reading from the N-terminus, the 537-residue chain is Phosphoenolpyruvate carboxykinase (ATP) (537 aa).

Substrate is bound by residues Arg61, Tyr194, and Lys200. Residues Lys200, His219, and 235 to 243 (GLSGTGKTT) contribute to the ATP site. Residues Lys200 and His219 each contribute to the Mn(2+) site. Asp256 lines the Mn(2+) pocket. 3 residues coordinate ATP: Glu284, Arg322, and Thr448. Arg322 is a binding site for substrate.

This sequence belongs to the phosphoenolpyruvate carboxykinase (ATP) family. It depends on Mn(2+) as a cofactor.

It localises to the cytoplasm. The enzyme catalyses oxaloacetate + ATP = phosphoenolpyruvate + ADP + CO2. Its pathway is carbohydrate biosynthesis; gluconeogenesis. In terms of biological role, involved in the gluconeogenesis. Catalyzes the conversion of oxaloacetate (OAA) to phosphoenolpyruvate (PEP) through direct phosphoryl transfer between the nucleoside triphosphate and OAA. The polypeptide is Phosphoenolpyruvate carboxykinase (ATP) (Bradyrhizobium sp. (strain BTAi1 / ATCC BAA-1182)).